The sequence spans 647 residues: 2',3'-cyclic-nucleotide 2'-phosphodiesterase/3'-nucleotidase (647 aa).

The signal sequence occupies residues 1-19 (MIKFSATLLATLIAASVNA). A divalent metal cation-binding residues include D31, H33, D76, N116, H225, H257, and H259. Residues Y440 and 544-550 (YRAYGGK) each bind substrate.

Belongs to the 5'-nucleotidase family. A divalent metal cation is required as a cofactor.

It is found in the periplasm. It catalyses the reaction a nucleoside 2',3'-cyclic phosphate + H2O = a nucleoside 3'-phosphate + H(+). The enzyme catalyses a ribonucleoside 3'-phosphate + H2O = a ribonucleoside + phosphate. Its function is as follows. This bifunctional enzyme catalyzes two consecutive reactions during ribonucleic acid degradation. Converts a 2',3'-cyclic nucleotide to a 3'-nucleotide and then the 3'-nucleotide to the corresponding nucleoside and phosphate. This is 2',3'-cyclic-nucleotide 2'-phosphodiesterase/3'-nucleotidase (cpdB) from Salmonella typhimurium (strain LT2 / SGSC1412 / ATCC 700720).